Reading from the N-terminus, the 336-residue chain is MELPPNPGLVDVQRDALYAYDSEAHKAVVNSRPWTNDHKYFKTVRISSVAMIKMVMHARSGGNLEVMGMMQGYIEGSTMVITDAYRLPVEGTETRVNAQDEANEYMVEYLRLCREENRLENVIGWYHSHPGYGCWLSGIDVGTQSLQQQFNEPFVAVVIDPDRTVSQNKVEIGAFRTIPEGIKPFAATNTTTGDGQSVPLNKVEDFGAHSHRYYALDVEHFKSTLDSKLLETLWNKYWVQTLAQNPLLTNRDYTSSQMVDLGSRISKASKSLEMLSTTGQRGPKSDAVDQNIEKLLSEVKQIAAKERSGLMAAEVKGKVFGCGCRGQAEGVQPEKS.

The region spanning 44-181 (VRISSVAMIK…IGAFRTIPEG (138 aa)) is the MPN domain. 3 residues coordinate Zn(2+): histidine 127, histidine 129, and aspartate 140. A JAMM motif motif is present at residues 127-140 (HSHPGYGCWLSGID).

Belongs to the peptidase M67A family. CSN5 subfamily. As to quaternary structure, component of the COP9 signalosome (CSN) complex.

Its subcellular location is the cytoplasm. The protein resides in the nucleus. In terms of biological role, catalytic component of the COP9 signalosome (CSN) complex that acts as an regulator of the ubiquitin (Ubl) conjugation pathway by mediating the deneddylation of the cullin subunit of SCF-type E3 ubiquitin-protein ligase complexes. The CSN complex is involved in the regulation of the circadian clock through its control of the stability of the SCF(FWD-1) complex. The polypeptide is COP9 signalosome complex subunit 5 (csn-5) (Neurospora crassa (strain ATCC 24698 / 74-OR23-1A / CBS 708.71 / DSM 1257 / FGSC 987)).